Here is a 208-residue protein sequence, read N- to C-terminus: Small ribosomal subunit protein uS4 (208 aa).

The region spanning G98–K158 is the S4 RNA-binding domain.

Belongs to the universal ribosomal protein uS4 family. In terms of assembly, part of the 30S ribosomal subunit. Contacts protein S5. The interaction surface between S4 and S5 is involved in control of translational fidelity.

In terms of biological role, one of the primary rRNA binding proteins, it binds directly to 16S rRNA where it nucleates assembly of the body of the 30S subunit. With S5 and S12 plays an important role in translational accuracy. This is Small ribosomal subunit protein uS4 from Haemophilus ducreyi (strain 35000HP / ATCC 700724).